We begin with the raw amino-acid sequence, 207 residues long: ATP-dependent Clp protease proteolytic subunit (207 aa).

Catalysis depends on S111, which acts as the Nucleophile. Residue H136 is part of the active site.

Belongs to the peptidase S14 family. Fourteen ClpP subunits assemble into 2 heptameric rings which stack back to back to give a disk-like structure with a central cavity, resembling the structure of eukaryotic proteasomes.

It localises to the cytoplasm. The catalysed reaction is Hydrolysis of proteins to small peptides in the presence of ATP and magnesium. alpha-casein is the usual test substrate. In the absence of ATP, only oligopeptides shorter than five residues are hydrolyzed (such as succinyl-Leu-Tyr-|-NHMec, and Leu-Tyr-Leu-|-Tyr-Trp, in which cleavage of the -Tyr-|-Leu- and -Tyr-|-Trp bonds also occurs).. Cleaves peptides in various proteins in a process that requires ATP hydrolysis. Has a chymotrypsin-like activity. Plays a major role in the degradation of misfolded proteins. The sequence is that of ATP-dependent Clp protease proteolytic subunit from Pectobacterium atrosepticum (strain SCRI 1043 / ATCC BAA-672) (Erwinia carotovora subsp. atroseptica).